We begin with the raw amino-acid sequence, 363 residues long: Ferredoxin--NADP reductase, cyanelle (363 aa).

Residues 1 to 65 constitute a cyanelle transit peptide; it reads MAFVASVPVF…TFEVDTTIRA (65 aa). In terms of domain architecture, FAD-binding FR-type spans 84–206; sequence ANPYIGKCIY…TGPVGTTMLM (123 aa). FAD-binding positions include 142-145, 163-165, tyrosine 169, 180-182, and threonine 221; these read RLYS, SVK, and VCS. NADP(+) is bound by residues serine 145 and lysine 165. NADP(+) contacts are provided by residues threonine 221, 253-254, 283-284, lysine 293, 322-323, and glutamate 361; these read VP, SR, and GL.

The protein belongs to the ferredoxin--NADP reductase type 1 family. It depends on FAD as a cofactor.

It localises to the plastid. The protein localises to the cyanelle stroma. The protein resides in the cyanelle thylakoid membrane. It catalyses the reaction 2 reduced [2Fe-2S]-[ferredoxin] + NADP(+) + H(+) = 2 oxidized [2Fe-2S]-[ferredoxin] + NADPH. Its function is as follows. May play a key role in regulating the relative amounts of cyclic and non-cyclic electron flow to meet the demands of the plant for ATP and reducing power. This is Ferredoxin--NADP reductase, cyanelle (PETH) from Cyanophora paradoxa.